A 239-amino-acid polypeptide reads, in one-letter code: Sugar fermentation stimulation protein homolog (239 aa).

This sequence belongs to the SfsA family.

This Alcanivorax borkumensis (strain ATCC 700651 / DSM 11573 / NCIMB 13689 / SK2) protein is Sugar fermentation stimulation protein homolog.